A 516-amino-acid polypeptide reads, in one-letter code: MFNDIESHRVPNVGQGRSFEVRTFGCQMNVHDSERLSGLLEEAGYHAVADGEEPDLVVFNTCAVRENADKRLYGTLGQLRSAKEKNPRMQIAVGGCLAQKDKDTVVAKAPWVDAVFGTHNMGALPSLLSRSEHNKRAEVEIVDSLEQFPSVLPAKRESAYAGWVSVSVGCNNTCTFCIVPSLRGKEVDRRPGDILAEVQALVDQGVSEVTLLGQNVNAYGVNFSDPDIQRDRFAFSKLLRACGKIEGLERLRFTSPHPAEFTHDVIDAMAETPNVCPQLHMPLQSGSDKVLKEMRRSYRSKKFLGILEEVRAKIPHASITTDIIVGFPGETEEDFQETLNVVEKARFTSAYTFQYSPRPGTPAADYADQVPKEVVQDRYERLLALQERISTEENAKLIGTEVELLVQASGGRKNDKTQRMTGRSRDGRLVHFDPQGHVDGDIRPGDVITTVVTEAKPFFLIADSGVLQHRRTKAGDMSAAGKVPTTAPVGVGLGLPSIGSPAQKRSETSKSSGCGC.

An MTTase N-terminal domain is found at 17–133 (RSFEVRTFGC…LPSLLSRSEH (117 aa)). [4Fe-4S] cluster-binding residues include Cys-26, Cys-62, Cys-96, Cys-170, Cys-174, and Cys-177. One can recognise a Radical SAM core domain in the interval 156-392 (RESAYAGWVS…LALQERISTE (237 aa)). A TRAM domain is found at 395 to 466 (AKLIGTEVEL…PFFLIADSGV (72 aa)). 2 disordered regions span residues 409 to 438 (SGGR…QGHV) and 492 to 516 (GLGL…GCGC). A compositionally biased stretch (basic and acidic residues) spans 412–438 (RKNDKTQRMTGRSRDGRLVHFDPQGHV).

The protein belongs to the methylthiotransferase family. MiaB subfamily. Monomer. It depends on [4Fe-4S] cluster as a cofactor.

Its subcellular location is the cytoplasm. It catalyses the reaction N(6)-dimethylallyladenosine(37) in tRNA + (sulfur carrier)-SH + AH2 + 2 S-adenosyl-L-methionine = 2-methylsulfanyl-N(6)-dimethylallyladenosine(37) in tRNA + (sulfur carrier)-H + 5'-deoxyadenosine + L-methionine + A + S-adenosyl-L-homocysteine + 2 H(+). In terms of biological role, catalyzes the methylthiolation of N6-(dimethylallyl)adenosine (i(6)A), leading to the formation of 2-methylthio-N6-(dimethylallyl)adenosine (ms(2)i(6)A) at position 37 in tRNAs that read codons beginning with uridine. This Corynebacterium diphtheriae (strain ATCC 700971 / NCTC 13129 / Biotype gravis) protein is tRNA-2-methylthio-N(6)-dimethylallyladenosine synthase.